The sequence spans 149 residues: C-type lectin domain family 2 member B (149 aa).

At 1–7 (MMTKHKK) the chain is on the cytoplasmic side. Residues 8-25 (CFIIVGVLITTNIITLIV) form a helical; Signal-anchor for type II membrane protein membrane-spanning segment. Over 26–149 (KLTRDSQSLC…RKWICRKRIH (124 aa)) the chain is Extracellular. C35 and C46 are oxidised to a cystine. Residues 42–145 (FQNKCYYFSK…CYTERKWICR (104 aa)) form the C-type lectin domain. N-linked (GlcNAc...) asparagine glycosylation is found at N57, N62, and N100. 2 disulfides stabilise this stretch: C63-C144 and C123-C136.

Homodimer. Interacts with NKp80/KLRF1. In terms of processing, (Microbial infection) Ubiquitinated by human herpesvirus 8 protein K5, leading to endolysosomal degradation. N-linked glycosylated; required to enable surface expression and the extent of surface expression correlates with the number of functional conventional N-glycosylation sites. As to expression, expressed preferentially in lymphoid tissues, and in most hematopoietic cell types.

The protein resides in the cell membrane. The protein localises to the golgi apparatus membrane. In terms of biological role, membrane-bound protein expressed on myeloid cells which acts as a ligand to stimulate the activating receptor NKp80/KLRF1, expressed on the surface of natural killer (NK) cells. In turn, stimulates NK-cell cytotoxicity and cytokine production leading to the cytolysis of malignant CLEC2B-expressing myeloid cells. The polypeptide is C-type lectin domain family 2 member B (CLEC2B) (Homo sapiens (Human)).